We begin with the raw amino-acid sequence, 325 residues long: Elongation factor P--(R)-beta-lysine ligase (325 aa).

76-78 is a substrate binding site; sequence SPE. ATP-binding positions include 100–102 and asparagine 109; that span reads RNE. Position 118 (tyrosine 118) interacts with substrate. 244–245 is a binding site for ATP; that stretch reads EL. Glutamate 251 provides a ligand contact to substrate. Residue glycine 300 participates in ATP binding.

The protein belongs to the class-II aminoacyl-tRNA synthetase family. EpmA subfamily. Homodimer.

It catalyses the reaction D-beta-lysine + L-lysyl-[protein] + ATP = N(6)-((3R)-3,6-diaminohexanoyl)-L-lysyl-[protein] + AMP + diphosphate + H(+). Its function is as follows. With EpmB is involved in the beta-lysylation step of the post-translational modification of translation elongation factor P (EF-P). Catalyzes the ATP-dependent activation of (R)-beta-lysine produced by EpmB, forming a lysyl-adenylate, from which the beta-lysyl moiety is then transferred to the epsilon-amino group of a conserved specific lysine residue in EF-P. This is Elongation factor P--(R)-beta-lysine ligase from Klebsiella pneumoniae subsp. pneumoniae (strain ATCC 700721 / MGH 78578).